We begin with the raw amino-acid sequence, 428 residues long: Probable glucose-6-phosphate isomerase (428 aa).

Glutamate 269 serves as the catalytic Proton donor. Catalysis depends on residues histidine 290 and lysine 401.

The protein belongs to the GPI family.

Its subcellular location is the cytoplasm. It carries out the reaction alpha-D-glucose 6-phosphate = beta-D-fructose 6-phosphate. The protein operates within carbohydrate biosynthesis; gluconeogenesis. Its pathway is carbohydrate degradation; glycolysis; D-glyceraldehyde 3-phosphate and glycerone phosphate from D-glucose: step 2/4. In terms of biological role, catalyzes the reversible isomerization of glucose-6-phosphate to fructose-6-phosphate. This chain is Probable glucose-6-phosphate isomerase, found in Natronomonas pharaonis (strain ATCC 35678 / DSM 2160 / CIP 103997 / JCM 8858 / NBRC 14720 / NCIMB 2260 / Gabara) (Halobacterium pharaonis).